Here is a 111-residue protein sequence, read N- to C-terminus: Integration host factor subunit alpha (111 aa).

The protein belongs to the bacterial histone-like protein family. Heterodimer of an alpha and a beta chain.

Its function is as follows. This protein is one of the two subunits of integration host factor, a specific DNA-binding protein that functions in genetic recombination as well as in transcriptional and translational control. The sequence is that of Integration host factor subunit alpha from Chelativorans sp. (strain BNC1).